Consider the following 398-residue polypeptide: Phosphoglycerate kinase (398 aa).

Substrate-binding positions include 20 to 22, arginine 35, 58 to 61, arginine 118, and arginine 155; these read DFN and HLGK. Residues lysine 208, glycine 296, glutamate 327, and 354–357 each bind ATP; that span reads GGDS.

Belongs to the phosphoglycerate kinase family. Monomer.

The protein resides in the cytoplasm. It carries out the reaction (2R)-3-phosphoglycerate + ATP = (2R)-3-phospho-glyceroyl phosphate + ADP. It functions in the pathway carbohydrate degradation; glycolysis; pyruvate from D-glyceraldehyde 3-phosphate: step 2/5. The polypeptide is Phosphoglycerate kinase (Fusobacterium nucleatum subsp. nucleatum (strain ATCC 25586 / DSM 15643 / BCRC 10681 / CIP 101130 / JCM 8532 / KCTC 2640 / LMG 13131 / VPI 4355)).